The chain runs to 196 residues: DnaA initiator-associating protein DiaA (196 aa).

The 163-residue stretch at 34-196 (LVQSLLNGNK…DNTLFPHQDD (163 aa)) folds into the SIS domain.

This sequence belongs to the SIS family. DiaA subfamily. In terms of assembly, homotetramer; dimer of dimers.

Functionally, required for the timely initiation of chromosomal replication via direct interactions with the DnaA initiator protein. This chain is DnaA initiator-associating protein DiaA, found in Shigella flexneri serotype 5b (strain 8401).